The sequence spans 687 residues: Triadin (687 aa).

The Cytoplasmic segment spans residues 1–47 (MTEITAEGNASITTTVIDNKNGSVPKSPGKVLKRTVTEDIVTTFSSP). Residues 48-68 (AAWLLVIALIITWSAVAIVMF) traverse the membrane as a helical segment. Over 69-687 (DLVDYKNFSA…NSPGQKQQEQ (619 aa)) the chain is Lumenal. Positions 117-130 (DGDEDDEDADEDID) are enriched in acidic residues. Disordered regions lie at residues 117–265 (DGDE…EQKD), 280–643 (GDLK…QKSP), and 660–687 (FQFP…QQEQ). A compositionally biased stretch (basic and acidic residues) spans 131 to 265 (KGEIEEPPLK…PAVPKHEQKD (135 aa)). Over residues 295–306 (LTASRPALSTPS) the composition is skewed to polar residues. Residues Ser-303 and Ser-306 each carry the phosphoserine modification. The segment covering 307 to 356 (LEEKEKEEKKKVEKKVTSDTKKKEKGEAKKKSEKETVIDGKGKEPGKPPE) has biased composition (basic and acidic residues). Low complexity predominate over residues 357-370 (TKQTTTKLTTQAAA). Basic and acidic residues-rich tracts occupy residues 371-390 (TKDE…EEKP), 396-431 (EKKE…KEEI), 442-459 (GKKE…DVKP), and 466-501 (LKKE…KEAK). Asn-514 carries N-linked (GlcNAc...) asparagine glycosylation. 2 stretches are compositionally biased toward basic and acidic residues: residues 539 to 583 (TAEK…KVPP) and 594 to 630 (TRAE…DKEV). 2 stretches are compositionally biased toward polar residues: residues 631-643 (TNNV…QKSP) and 667-687 (VQHS…QQEQ).

As to quaternary structure, homooligomer of variable subunit number; disulfide-linked. Interacts with CASQ1 in skeletal muscle. Interacts with CASQ2. Interacts with RYR1 in skeletal muscle. Post-translationally, phosphorylated by CaMK2. N-glycosylated. As to expression, detected in skeletal muscle (at protein level). Detected in skeletal muscle.

The protein localises to the sarcoplasmic reticulum membrane. Its subcellular location is the microsome. It is found in the cell membrane. It localises to the sarcolemma. In terms of biological role, contributes to the regulation of lumenal Ca2+ release via the sarcoplasmic reticulum calcium release channels RYR1 and RYR2, a key step in triggering skeletal and heart muscle contraction. Required for normal organization of the triad junction, where T-tubules and the sarcoplasmic reticulum terminal cisternae are in close contact. Required for normal skeletal muscle strength. Plays a role in excitation-contraction coupling in the heart and in regulating the rate of heart beats. This Rattus norvegicus (Rat) protein is Triadin.